We begin with the raw amino-acid sequence, 956 residues long: Zinc protease PQQL-like (956 aa).

N-acetylmethionine is present on Met1. His85 lines the Zn(2+) pocket. Catalysis depends on Glu88, which acts as the Proton acceptor. His89 lines the Zn(2+) pocket. The active site involves Glu165. Glu172 is a Zn(2+) binding site.

The protein belongs to the peptidase M16 family. Zn(2+) is required as a cofactor.

The protein is Zinc protease PQQL-like of Arabidopsis thaliana (Mouse-ear cress).